Consider the following 700-residue polypeptide: Hedgehog-interacting protein (700 aa).

The N-terminal stretch at 1–17 (MLKMLSFKLLLLAVALG) is a signal peptide. N99 is a glycosylation site (N-linked (GlcNAc...) asparagine). 10 cysteine pairs are disulfide-bonded: C216-C536, C218-C543, C402-C624, C435-C452, C500-C594, C612-C623, C625-C634, C639-C649, C643-C655, and C657-C666. The tract at residues 376-388 (LDDMEEMDGLSDF) is interaction with SHH zinc binding site. D383 provides a ligand contact to Zn(2+). N-linked (GlcNAc...) asparagine glycosylation is found at N416, N447, and N459. EGF-like domains lie at 607–634 (DCSR…GDFC) and 635–667 (RIAK…PQCE).

It belongs to the HHIP family. In terms of assembly, interacts with all three hedgehog family members, SHH, IHH and DHH. As to expression, in the adult brain, high expression found in the ventral cochlear nucleus, medial habenula, indusium griseum and tenia tecta. Some expression also in the caudate putamen, the nucleus accumbens, the ventral pallidum and in the superficial layers of the superior colliculus.

The protein resides in the cell membrane. Its subcellular location is the secreted. Modulates hedgehog signaling in several cell types, including brain and lung through direct interaction with members of the hedgehog family. Soluble forms inhibit Shh-induced differentiation in the fibroblast cell line C3H/10T1/2. This chain is Hedgehog-interacting protein (Hhip), found in Mus musculus (Mouse).